We begin with the raw amino-acid sequence, 166 residues long: Putative esterase sll0410 (166 aa).

D45 is an active-site residue.

It belongs to the 4-hydroxybenzoyl-CoA thioesterase family.

In Synechocystis sp. (strain ATCC 27184 / PCC 6803 / Kazusa), this protein is Putative esterase sll0410.